The primary structure comprises 336 residues: F420-dependent glucose-6-phosphate dehydrogenase (336 aa).

Residue Asp39 participates in coenzyme F420-(gamma-Glu)n binding. His40 serves as the catalytic Proton donor. Coenzyme F420-(gamma-Glu)n-binding positions include Thr76 and 107–108 (TG). Glu109 (proton acceptor) is an active-site residue. Coenzyme F420-(gamma-Glu)n-binding positions include Asn112, 177 to 178 (GG), and 180 to 181 (VV). The substrate site is built by Thr195, Lys198, Lys259, and Arg283.

Belongs to the F420-dependent glucose-6-phosphate dehydrogenase family. In terms of assembly, homodimer.

The enzyme catalyses oxidized coenzyme F420-(gamma-L-Glu)(n) + D-glucose 6-phosphate + H(+) = 6-phospho-D-glucono-1,5-lactone + reduced coenzyme F420-(gamma-L-Glu)(n). Functionally, catalyzes the coenzyme F420-dependent oxidation of glucose 6-phosphate (G6P) to 6-phosphogluconolactone. Appears to have a role in resistance to oxidative stress, via its consumption of G6P that serves as a source of reducing power to combat oxidative stress in mycobacteria. The polypeptide is F420-dependent glucose-6-phosphate dehydrogenase (Mycolicibacterium fortuitum (Mycobacterium fortuitum)).